We begin with the raw amino-acid sequence, 170 residues long: Mitotic-spindle organizing protein 2B (170 aa).

2 disordered regions span residues 1-26 and 102-170; these read MSRGQTEGSQAMASSQAAGPGPSPDA and SADS…GSST. The span at 8-20 shows a compositional bias: low complexity; that stretch reads GSQAMASSQAAGP. The span at 123–132 shows a compositional bias: polar residues; it reads PNPTTSTTQG. Residues 151-170 are compositionally biased toward low complexity; sequence SGSRMQKSSSSGKSSGGSST.

It belongs to the MOZART2 family. In terms of assembly, part of the gamma-tubulin complex. Interacts with TUBG1.

The protein localises to the cytoplasm. It localises to the cytoskeleton. Its subcellular location is the microtubule organizing center. The protein resides in the centrosome. It is found in the spindle. This chain is Mitotic-spindle organizing protein 2B (mzt2b), found in Xenopus tropicalis (Western clawed frog).